Here is a 494-residue protein sequence, read N- to C-terminus: Cytochrome P450 2A4 (494 aa).

At Ser-131 the chain carries Phosphoserine. Lys-379 is subject to N6-acetyllysine. A heme-binding site is contributed by Cys-439.

This sequence belongs to the cytochrome P450 family. Requires heme as cofactor. Kidney and lung. Expressed in liver, with a strong circadian rhythmicity. Circadian expression is regulated by DBP.

The protein resides in the endoplasmic reticulum membrane. It localises to the microsome membrane. The catalysed reaction is an organic molecule + reduced [NADPH--hemoprotein reductase] + O2 = an alcohol + oxidized [NADPH--hemoprotein reductase] + H2O + H(+). In terms of biological role, highly active in the 15-alpha-hydroxylation of testosterone. Also active in the 15-alpha-hydroxylation of progesterone and androstenedione. Little or no activity on corticosterone, pregnenolone, dehydroepiandrosterone, estradiol or estriol. The polypeptide is Cytochrome P450 2A4 (Cyp2a4) (Mus musculus (Mouse)).